Reading from the N-terminus, the 553-residue chain is MDNMSITNTPTSNDACLSIVHSLMCHRQGGESETFAKRAIESLVKKLKEKKDELDSLITAITTNGAHPSKCVTIQRTLDGRLQVAGRKGFPHVIYARLWRWPDLHKNELKHVKYCQYAFDLKCDSVCVNPYHYERVVSPGIDLSGLTLQSNAPPSMLVKDEYVHDFEGQPSLSTEGHSIQTIQHPPSNRASTETYSTPALLAPSESNATSTTNFPNIPVASTSQPASILAGSHSEGLLQIASGPQPGQQQNGFTGQPATYHHNSTTTWTGGRTAPYTPNLPHHQNGHLQHHPPMPPHPGHYWPPVHNELAFQPPISNHPAPEYWCSIAYFEMDVQVGETFKVPSSCPIVTVDGYVDPSGGDRFCLGQLSNVHRTEAIERARLHIGKGVQLECKGEGDVWVRCLSDHAVFVQSYYLDREAGRAPGDAVHKIYPSAYIKVFDLRQCHRQMQQQAATAQAAAAAQAAAVAGNIPGPGSVGGIAPAISLSAAAGIGVDDLRRLCILRMSFVKGWGPDYPRQSIKETPCWIEIHLHRALQLLDEVLHTMPIADPQPLD.

The segment at 1 to 323 (MDNMSITNTP…PISNHPAPEY (323 aa)) is mediates interaction with ZBTB7A. The MH1 domain maps to 18–142 (SIVHSLMCHR…YERVVSPGID (125 aa)). The residue at position 37 (lysine 37) is an N6-acetyllysine. A required for interaction with TSC22D1 region spans residues 44–69 (VKKLKEKKDELDSLITAITTNGAHPS). Cysteine 71 serves as a coordination point for Zn(2+). Lysine 113 is covalently cross-linked (Glycyl lysine isopeptide (Lys-Gly) (interchain with G-Cter in SUMO2)). The Zn(2+) site is built by cysteine 115, cysteine 127, and histidine 132. The tract at residues 168-194 (GQPSLSTEGHSIQTIQHPPSNRASTET) is disordered. Residues 170–194 (PSLSTEGHSIQTIQHPPSNRASTET) are compositionally biased toward polar residues. The interval 275–321 (PYTPNLPHHQNGHLQHHPPMPPHPGHYWPPVHNELAFQPPISNHPAP) is SAD. The region spanning 324 to 553 (WCSIAYFEMD…MPIADPQPLD (230 aa)) is the MH2 domain. Residues lysine 429 and lysine 508 each carry the N6-acetyllysine modification. Lysine 520 is covalently cross-linked (Glycyl lysine isopeptide (Lys-Gly) (interchain with G-Cter in ubiquitin)).

This sequence belongs to the dwarfin/SMAD family. Monomer; in the absence of TGF-beta activation. Heterotrimer; on TGF-beta activation. Heterotrimer composed of two molecules of a C-terminally phosphorylated R-SMAD molecule, SMAD2 or SMAD3, and one molecule of SMAD4 to form the transcriptional active SMAD2/SMAD3-SMAD4 complex. Found in a ternary complex composed of SMAD4, STK11/LKB1 and STK11IP. Found in a complex with SMAD1 and YY1. Identified in a complex that contains at least ZNF451, SMAD2, SMAD3 and SMAD4. Interacts with ATF2, COPS5, DACH1, MSG1, SKI, STK11/LKB1, STK11IP and TRIM33. Associates with ZNF423 or ZNF521 in response to BMP2 leading to activate transcription of BMP target genes. Interacts with USP9X. Interacts with RBPMS. Interacts with WWTR1 (via coiled-coil domain). Interacts with CITED1 and CITED2. Interacts with PDPK1 (via PH domain). Interacts with VPS39; this interaction affects heterodimer formation with SMAD3, but not with SMAD2, and leads to inhibition of SMAD3-dependent transcription activation. Interactions with VPS39 and SMAD2 may be mutually exclusive. Interacts (via MH2 domain) with ZNF451 (via N-terminal zinc-finger domains). Interacts with ZC3H3. Interacts weakly with ZNF8. Interacts with NUP93 and IPO7; translocates SMAD4 to the nucleus through the NPC upon BMP7 stimulation resulting in activation of SMAD4 signaling. Interacts with CREB3L1, the interaction takes place upon TGFB1 induction and SMAD4 acts as a CREB3L1 coactivator to induce the expression of genes involved in the assembly of collagen extracellular matrix. Interacts with DLX1. Interacts with ZBTB7A; the interaction is direct and stimulated by TGFB1. Interacts with CREBBP; the recruitment of this transcriptional coactivator is negatively regulated by ZBTB7A. Interacts with EP300; the interaction with this transcriptional coactivator is negatively regulated by ZBTB7A. Interacts with HDAC1. Interacts (via MH2 domain) with ZMIZ1 (via SP-RING-type domain); in the TGF-beta signaling pathway increases the activity of the SMAD3/SMAD4 transcriptional complex. Interacts (via N-terminus) with TSC22D1. Post-translationally, monoubiquitinated on Lys-520 by E3 ubiquitin-protein ligase TRIM33. Monoubiquitination hampers its ability to form a stable complex with activated SMAD2/3 resulting in inhibition of TGF-beta/BMP signaling cascade. Phosphorylated by PDPK1.

The protein resides in the cytoplasm. The protein localises to the nucleus. Functionally, common SMAD (co-SMAD) is the coactivator and mediator of signal transduction by TGF-beta (transforming growth factor). Component of the heterotrimeric SMAD2/SMAD3-SMAD4 complex that forms in the nucleus and is required for the TGF-mediated signaling. Promotes binding of the SMAD2/SMAD4/FAST-1 complex to DNA and provides an activation function required for SMAD1 or SMAD2 to stimulate transcription. Component of the multimeric SMAD3/SMAD4/JUN/FOS complex which forms at the AP1 promoter site; required for synergistic transcriptional activity in response to TGF-beta. Acts synergistically with SMAD1 and YY1 in bone morphogenetic protein (BMP)-mediated cardiac-specific gene expression. Binds to SMAD binding elements (SBEs) (5'-GTCT/AGAC-3') within BMP response element (BMPRE) of cardiac activating regions. May act as a tumor suppressor. Positively regulates PDPK1 kinase activity by stimulating its dissociation from the 14-3-3 protein YWHAQ which acts as a negative regulator. In muscle physiology, plays a central role in the balance between atrophy and hypertrophy. When recruited by MSTN, promotes atrophy response via phosphorylated SMAD2/4. MSTN decrease causes SMAD4 release and subsequent recruitment by the BMP pathway to promote hypertrophy via phosphorylated SMAD1/5/8. In Bos taurus (Bovine), this protein is Mothers against decapentaplegic homolog 4 (SMAD4).